The primary structure comprises 173 residues: Large ribosomal subunit protein bL9 (173 aa).

The tract at residues 151–173 (YDDTPDRTETEESTKELQEEHAE) is disordered.

This sequence belongs to the bacterial ribosomal protein bL9 family.

Its function is as follows. Binds to the 23S rRNA. This chain is Large ribosomal subunit protein bL9, found in Lawsonia intracellularis (strain PHE/MN1-00).